Consider the following 102-residue polypeptide: Integration host factor subunit alpha (102 aa).

It belongs to the bacterial histone-like protein family. As to quaternary structure, heterodimer of an alpha and a beta chain.

In terms of biological role, this protein is one of the two subunits of integration host factor, a specific DNA-binding protein that functions in genetic recombination as well as in transcriptional and translational control. In Buchnera aphidicola subsp. Acyrthosiphon pisum (strain 5A), this protein is Integration host factor subunit alpha.